Consider the following 176-residue polypeptide: NAD(P)H-quinone oxidoreductase subunit 6, chloroplastic (176 aa).

A run of 5 helical transmembrane segments spans residues Phe10–Thr30, Pro32–Pro52, Ala60–Phe80, Ile107–Thr127, and Phe152–Ala172.

It belongs to the complex I subunit 6 family. As to quaternary structure, NDH is composed of at least 16 different subunits, 5 of which are encoded in the nucleus.

The protein resides in the plastid. Its subcellular location is the chloroplast thylakoid membrane. The catalysed reaction is a plastoquinone + NADH + (n+1) H(+)(in) = a plastoquinol + NAD(+) + n H(+)(out). It catalyses the reaction a plastoquinone + NADPH + (n+1) H(+)(in) = a plastoquinol + NADP(+) + n H(+)(out). Functionally, NDH shuttles electrons from NAD(P)H:plastoquinone, via FMN and iron-sulfur (Fe-S) centers, to quinones in the photosynthetic chain and possibly in a chloroplast respiratory chain. The immediate electron acceptor for the enzyme in this species is believed to be plastoquinone. Couples the redox reaction to proton translocation, and thus conserves the redox energy in a proton gradient. This Buxus microphylla (Littleleaf boxwood) protein is NAD(P)H-quinone oxidoreductase subunit 6, chloroplastic (ndhG).